Here is a 261-residue protein sequence, read N- to C-terminus: tRNA pseudouridine synthase A (261 aa).

D53 acts as the Nucleophile in catalysis. Residue Y111 coordinates substrate.

It belongs to the tRNA pseudouridine synthase TruA family. In terms of assembly, homodimer.

It catalyses the reaction uridine(38/39/40) in tRNA = pseudouridine(38/39/40) in tRNA. Formation of pseudouridine at positions 38, 39 and 40 in the anticodon stem and loop of transfer RNAs. This Shouchella clausii (strain KSM-K16) (Alkalihalobacillus clausii) protein is tRNA pseudouridine synthase A.